Consider the following 447-residue polypeptide: UPF0210 protein Ldb1026 (447 aa).

Belongs to the UPF0210 family. As to quaternary structure, homodimer.

The polypeptide is UPF0210 protein Ldb1026 (Lactobacillus delbrueckii subsp. bulgaricus (strain ATCC 11842 / DSM 20081 / BCRC 10696 / JCM 1002 / NBRC 13953 / NCIMB 11778 / NCTC 12712 / WDCM 00102 / Lb 14)).